Reading from the N-terminus, the 944-residue chain is MKRKDNKELICIPSSSPPSTPIREENYYLLTSSPIECSPIQQLDLSGSFKNYSTTSSRANGKKFGQLAMQSRIFFDTTDHKKYVESSYAAYDPHDQPPERDVSLKESSNKINPSNFFDSEQITKINAVKKRFPALDSEMIIATLEKFNWRENITIHKLTFQKLLGRGNSTINKSAQKLNNQPIEKSSVDKENAKRKRYVEEGTKQGQKKKPLRVIELSDEETNEDDLLGQSPTACTTDANIDNSIPENSDKIEEVSIESSGPSEVEDEMSEYDVRVLNFLNESTLQEIVEVSGCESKVVEYFISKRPFPSLEKAEALCQRNAHAATGKRKKSDGRNVGRKLVNSTYEVLQGFDAVDSLIAKCERYGAMISNTMRSWHNLFDDKKMEQFLNTSTGSISYEYNSQQPSSIASGITLKSYQIVGLNWLCLMYKAKLSGILADEMGLGKTCQVISFLASLKEKGIQNRHLVVVPSSTLGNWLREFEKFCPSLRVESYSGTQSERINKRYYLMDTDFDVLVTTYQLASGSRDDRSFLRKQRFDISIFDEGHYLKNRMSERYKHLMNIPANFRLLITGTPLQNNLKELISLLAFMLPKVFDNNMQGLDIIYKIKTTSDGDIERAYLSQERISRAKTIMNPFILRRRKENVLSDLPPKIQHVEYCHMEETQLSLYLSVLELKNLVNANRENILMQLRKAALHQLLFRSQYNLETLSLMSKRILREDAYLDANPQYIFEDMEVMSDFELHKLADQYRHLHPFALKGKPWMDSAKVKKLCSLLKKSRPNERILIFSQFTQVLDILEYVLNTLDLEFLRLDGSTPVETRQQLIDDFHTNENYKVFLLSTKSGGFGINLTCANIVILFDCSFNPFDDMQAEDRAHRVGQTRPVHVYRLITKNTIEENIRRLANTKLTLESSLTTDSEKIQKEISGELMKSLQMDGRVDTMDGSVV.

Disordered regions lie at residues 89 to 109 (AAYD…ESSN) and 174 to 246 (SAQK…NSIP). The span at 92–108 (DPHDQPPERDVSLKESS) shows a compositional bias: basic and acidic residues. Residues 174 to 184 (SAQKLNNQPIE) show a composition bias toward polar residues. A compositionally biased stretch (basic and acidic residues) spans 186–203 (SSVDKENAKRKRYVEEGT). The segment covering 217 to 227 (LSDEETNEDDL) has biased composition (acidic residues). A compositionally biased stretch (polar residues) spans 230-246 (QSPTACTTDANIDNSIP). In terms of domain architecture, Helicase ATP-binding spans 426–592 (CLMYKAKLSG…ISLLAFMLPK (167 aa)). Residue 439–446 (DEMGLGKT) coordinates ATP. The DEGH box signature appears at 543–546 (DEGH). In terms of domain architecture, Helicase C-terminal spans 766–923 (KVKKLCSLLK…DSEKIQKEIS (158 aa)).

It belongs to the SNF2/RAD54 helicase family.

It is found in the nucleus. It carries out the reaction ATP + H2O = ADP + phosphate + H(+). Its function is as follows. DNA helicase that possesses intrinsic ATP-dependent nucleosome-remodeling activity and is required for heterochromatin organization. The sequence is that of ATP-dependent helicase fft1 (fft1) from Schizosaccharomyces pombe (strain 972 / ATCC 24843) (Fission yeast).